The primary structure comprises 535 residues: Palmdelphin (535 aa).

Residues 1 to 105 (MEEAELLKER…KEELQVSTKE (105 aa)) adopt a coiled-coil conformation. The disordered stretch occupies residues 423–450 (VVIDDDDDDDDDEEADKKGEENTKESVS). Residues 424-436 (VIDDDDDDDDDEE) show a composition bias toward acidic residues. Basic and acidic residues predominate over residues 437-446 (ADKKGEENTK).

Belongs to the paralemmin family.

It is found in the cytoplasm. The protein localises to the cell projection. The protein resides in the dendrite. Its subcellular location is the dendritic spine. This chain is Palmdelphin (palmd), found in Xenopus laevis (African clawed frog).